The following is a 2210-amino-acid chain: Genome polyprotein (2210 aa).

Residues 1-24 form a disordered region; sequence MAPVVSRDQCKPKTPKPHRPAPPH. Residues 13-22 are compositionally biased toward basic residues; that stretch reads KTPKPHRPAP. The SF3 helicase domain maps to 426–585; it reads SNKIVELSTM…ADFLRQHPGV (160 aa). An ATP-binding site is contributed by 456-463; the sequence is GPPGHGKS. The residue at position 940 (Y940) is an O-(5'-phospho-RNA)-tyrosine. Residues 991–1136 form the Peptidase C24 domain; it reads GNNCDDIPLH…KVITPITPEP (146 aa). Active-site for 3CLpro activity residues include H1025, D1039, and C1103. The region spanning 1379-1501 is the RdRp catalytic domain; the sequence is DHCLELDYSK…TIPSHLTKSI (123 aa). The tract at residues 1656–1685 is disordered; the sequence is LIREGNMSDNKSIPEQQHESSRAMDAGATG.

In terms of processing, specific enzymatic cleavages by its own cysteine protease yield mature proteins. The protease cleaves itself from the nascent polyprotein autocatalytically. Precursor p41 can be cleaved by viral 3CLpro into protein p19 and VPg, or cleaved by host protease into protein p23/2 and protein p18. VPg is uridylylated by the polymerase and is covalently attached to the 5'-end of the polyadenylated genomic and subgenomic RNAs. This uridylylated form acts as a nucleotide-peptide primer for the polymerase.

The protein resides in the virion. Its subcellular location is the host cytoplasm. The catalysed reaction is a ribonucleoside 5'-triphosphate + H2O = a ribonucleoside 5'-diphosphate + phosphate + H(+). It catalyses the reaction Endopeptidase with a preference for cleavage when the P1 position is occupied by Glu-|-Xaa and the P1' position is occupied by Gly-|-Yaa.. The enzyme catalyses RNA(n) + a ribonucleoside 5'-triphosphate = RNA(n+1) + diphosphate. Functionally, displays NTPase activity, but no helicase activity. Induces the formation of convoluted membranes derived from the host ER. These remodeled membranes probably form the viral factories that contain the replication complex. Together with NS2 and NS4, initiates the formation of the replication complex. Its function is as follows. Viral genome-linked protein is covalently linked to the 5'-end of the positive-strand, negative-strand genomic RNAs and subgenomic RNA. Acts as a genome-linked replication primer. May recruit ribosome to viral RNA thereby promoting viral proteins translation. Interacts with host translation initiation complex to allow the translation of viral proteins. Processes the polyprotein. 3CLpro-RdRp is first released by autocleavage, then all other proteins are cleaved. May cleave polyadenylate-binding protein thereby inhibiting cellular translation. In terms of biological role, replicates genomic and antigenomic RNA by recognizing replications specific signals. Also transcribes a subgenomic mRNA by initiating RNA synthesis internally on antigenomic RNA. This sgRNA codes for structural proteins. Catalyzes the covalent attachment VPg with viral RNAs. Functionally, capsid protein self assembles to form an icosahedral capsid with a T=3 symmetry, about 35 nm in diameter, and consisting of 180 capsid proteins. A smaller form of capsid with a diameter of 23 nm might be capsid proteins assembled as icosahedron with T=1 symmetry. The capsid encapsulate VP2 proteins and genomic or subgenomic RNA. Attaches virion to target cells by binding histo-blood group antigens, inducing endocytosis of the viral particle. Acidification of the endosome induces conformational change of capsid protein thereby injecting virus genomic RNA into host cytoplasm. This chain is Genome polyprotein, found in Bovine enteric calicivirus NB (isolate Bovine/United States/N ebraska/1980) (BEC-NB).